Reading from the N-terminus, the 320-residue chain is Polyadenylate-binding protein-interacting protein 13 (320 aa).

The segment at 1-44 (MAVAENVGVKVDSSNNQNIDNNTTSLVETKPSCSDDQTPKSKSS) is disordered. Positions 12-44 (DSSNNQNIDNNTTSLVETKPSCSDDQTPKSKSS) are enriched in polar residues. The short motif at 65–75 (HLNPMAKEFVP) is the PAM2-like element. RRM domains follow at residues 137 to 212 (RTVY…MSKT) and 234 to 310 (KTVY…PSKT).

The chain is Polyadenylate-binding protein-interacting protein 13 (CID13) from Arabidopsis thaliana (Mouse-ear cress).